The sequence spans 1139 residues: Replication protein alpha-A (1139 aa).

Positions 60–438 (RRNISSEELQ…DGVKIAPDLI (379 aa)) are methyltransferase. One can recognise an Alphavirus-like MT domain in the interval 81-305 (SSSACESGTH…HDLKDYLKYV (225 aa)). The tract at residues 611-637 (SPLDLKSIPGSTPSHSSSDSEHSMTEE) is disordered. A compositionally biased stretch (low complexity) spans 617 to 627 (SIPGSTPSHSS). One can recognise a (+)RNA virus helicase ATP-binding domain in the interval 805–969 (DNTKLCNNWL…DYTKTIINPK (165 aa)). The interval 835 to 1109 (LIDGVPGCGK…SRHTKTFTYC (275 aa)) is helicase. Position 838–845 (838–845 (GVPGCGKS)) interacts with ATP. The (+)RNA virus helicase C-terminal domain maps to 970-1139 (LRSYRIPGDV…PIRTFESHIV (170 aa)).

Interacts with the suppressor of RNA silencing Gamma-B (via C-terminus).

It is found in the host chloroplast envelope. It carries out the reaction ATP + H2O = ADP + phosphate + H(+). In terms of biological role, probably contains methyltransferase and helicase activities. Methyltransferase displays a cytoplasmic capping enzyme activity. This function is necessary since all viral RNAs are synthesized in the cytoplasm, and host capping enzymes are restricted to the nucleus. Helicase region probably exhibits NTPase and RNA unwinding activities. This Barley stripe mosaic virus (BSMV) protein is Replication protein alpha-A.